The primary structure comprises 200 residues: MGITRDSRHKRSATGAKRAQYRKKRKFELGRQPSNTRIGPKRIHEVRVRGGNKKFRALRLDSGNFSWGSEGVSKKTRIIQVAYHPSNNELVRTNTLTKSAIVQIDAAPFRVWYETHYGILMGSKGKKATSTPNPKSKHVQRKHSARLGDSKVDSALETQFAAGRLYAVVSSRPGQSGRCDGYILEGEELHFYLRRMAPKK.

Disordered regions lie at residues 1–40 (MGIT…RIGP) and 123–145 (SKGK…KHSA). Residues 135–145 (KSKHVQRKHSA) show a composition bias toward basic residues.

Belongs to the eukaryotic ribosomal protein eS8 family. As to quaternary structure, component of the small ribosomal subunit (SSU). Mature yeast ribosomes consist of a small (40S) and a large (60S) subunit. The 40S small subunit contains 1 molecule of ribosomal RNA (18S rRNA) and at least 33 different proteins. The large 60S subunit contains 3 rRNA molecules (25S, 5.8S and 5S rRNA) and at least 46 different proteins.

It is found in the cytoplasm. Component of the ribosome, a large ribonucleoprotein complex responsible for the synthesis of proteins in the cell. The small ribosomal subunit (SSU) binds messenger RNAs (mRNAs) and translates the encoded message by selecting cognate aminoacyl-transfer RNA (tRNA) molecules. The large subunit (LSU) contains the ribosomal catalytic site termed the peptidyl transferase center (PTC), which catalyzes the formation of peptide bonds, thereby polymerizing the amino acids delivered by tRNAs into a polypeptide chain. The nascent polypeptides leave the ribosome through a tunnel in the LSU and interact with protein factors that function in enzymatic processing, targeting, and the membrane insertion of nascent chains at the exit of the ribosomal tunnel. In Schizosaccharomyces pombe (strain 972 / ATCC 24843) (Fission yeast), this protein is Small ribosomal subunit protein eS8A (rps801).